A 397-amino-acid chain; its full sequence is Tyrosine aminotransferase (397 aa).

Residues G34, Y66, W131, and N184 each contribute to the substrate site. Residue K247 is modified to N6-(pyridoxal phosphate)lysine. R375 provides a ligand contact to substrate.

Belongs to the class-I pyridoxal-phosphate-dependent aminotransferase family. Homodimer. Pyridoxal 5'-phosphate is required as a cofactor.

The catalysed reaction is L-tyrosine + 2-oxoglutarate = 3-(4-hydroxyphenyl)pyruvate + L-glutamate. It carries out the reaction 4-methylsulfanyl-2-oxobutanoate + L-tyrosine = 3-(4-hydroxyphenyl)pyruvate + L-methionine. It catalyses the reaction an aromatic L-alpha-amino acid + 2-oxoglutarate = an aromatic oxo-acid + L-glutamate. The enzyme catalyses L-aspartate + 2-oxoglutarate = oxaloacetate + L-glutamate. It functions in the pathway amino-acid biosynthesis; L-methionine biosynthesis via salvage pathway; L-methionine from S-methyl-5-thio-alpha-D-ribose 1-phosphate: step 6/6. Its activity is regulated as follows. Inhibited by malate and nitrotyrosine by approximately 20% at the higher concentration. At 100 uM, canaline and carboxymethoxylamine inhibit aminotransferase activity by 35 and 70%, respectively. Addition of 1.0 mM carboxymethoxylamine lead to a complete inhibition of the aminotransferase activity. Catalyzes the formation of methionine from 2-keto-4-methylthiobutyrate (KMTB) primarily using aromatic amino acids (tyrosine, phenylalanine and tryptophan) or glutamate as the amino donors. Histidine, leucine, asparagine, or arginine are also functional amino donors but to a lesser extent. Can also use alpha-ketoglutarate, oxaloacetate and pyruvate as the amino acceptors. This chain is Tyrosine aminotransferase (tyrB), found in Klebsiella pneumoniae.